The following is a 185-amino-acid chain: uncharacterized protein (185 aa).

This is an uncharacterized protein from Trypanosoma brucei brucei.